Consider the following 656-residue polypeptide: uncharacterized protein (656 aa).

Disordered stretches follow at residues 1-41 and 60-88; these read MMAT…ESEG and SNKVEKDSDSEQRGRKKETTGPNNYHNLE. Positions 22-36 are enriched in low complexity; sequence SDSSDSGSDVSFFSV. A Phosphoserine modification is found at S39. The segment covering 62–78 has biased composition (basic and acidic residues); the sequence is KVEKDSDSEQRGRKKET.

Its subcellular location is the cytoplasm. It localises to the mitochondrion. This is an uncharacterized protein from Saccharomyces cerevisiae (strain ATCC 204508 / S288c) (Baker's yeast).